A 601-amino-acid polypeptide reads, in one-letter code: NADH-quinone oxidoreductase subunit C/D (601 aa).

An NADH dehydrogenase I subunit C region spans residues 1-191 (MKLTRDFPHN…DPFMLDAAKQ (191 aa)). Residues 215-601 (DYMFLNLGPN…IDFVMSDVDR (387 aa)) are NADH dehydrogenase I subunit D.

It in the N-terminal section; belongs to the complex I 30 kDa subunit family. The protein in the C-terminal section; belongs to the complex I 49 kDa subunit family. In terms of assembly, NDH-1 is composed of 13 different subunits. Subunits NuoB, CD, E, F, and G constitute the peripheral sector of the complex.

The protein resides in the cell inner membrane. The enzyme catalyses a quinone + NADH + 5 H(+)(in) = a quinol + NAD(+) + 4 H(+)(out). NDH-1 shuttles electrons from NADH, via FMN and iron-sulfur (Fe-S) centers, to quinones in the respiratory chain. The immediate electron acceptor for the enzyme in this species is believed to be ubiquinone. Couples the redox reaction to proton translocation (for every two electrons transferred, four hydrogen ions are translocated across the cytoplasmic membrane), and thus conserves the redox energy in a proton gradient. This chain is NADH-quinone oxidoreductase subunit C/D, found in Shewanella oneidensis (strain ATCC 700550 / JCM 31522 / CIP 106686 / LMG 19005 / NCIMB 14063 / MR-1).